The primary structure comprises 400 residues: D(3) dopamine receptor (400 aa).

Residues 1–32 (MASLSQLSGHLNYTCGAENSTGASQARPHAYY) are Extracellular-facing. N12 and N19 each carry an N-linked (GlcNAc...) asparagine glycan. The helical transmembrane segment at 33 to 55 (ALSYCALILAIVFGNGLVCMAVL) threads the bilayer. Residues 56–65 (KERALQTTTN) lie on the Cytoplasmic side of the membrane. The chain crosses the membrane as a helical span at residues 66–88 (YLVVSLAVADLLVATLVMPWVVY). Residues 89 to 104 (LEVTGGVWNFSRICCD) lie on the Extracellular side of the membrane. N-linked (GlcNAc...) asparagine glycosylation is present at N97. A disulfide bond links C103 and C181. Residues 105 to 126 (VFVTLDVMMCTASILNLCAISI) form a helical membrane-spanning segment. Eticlopride is bound at residue D110. The Cytoplasmic segment spans residues 127 to 149 (DRYTAVVMPVHYQHGTGQSSCRR). Residues 150–170 (VALMITAVWVLAFAVSCPLLF) form a helical membrane-spanning segment. The Extracellular segment spans residues 171–187 (GFNTTGDPTVCSISNPD). A glycan (N-linked (GlcNAc...) asparagine) is linked at N173. The helical transmembrane segment at 188 to 209 (FVIYSSVVSFYLPFGVTVLVYA) threads the bilayer. Residues 210-329 (RIYVVLKQRR…VPLREKKATQ (120 aa)) lie on the Cytoplasmic side of the membrane. The chain crosses the membrane as a helical span at residues 330-351 (MVAIVLGAFIVCWLPFFLTHVL). Eticlopride-binding residues include F345 and H349. Residues 352–366 (NTHCQTCHVSPELYS) are Extracellular-facing. A disulfide bond links C355 and C358. A helical membrane pass occupies residues 367 to 386 (ATTWLGYVNSALNPVIYTTF). The Cytoplasmic portion of the chain corresponds to 387–400 (NIEFRKAFLKILSC).

The protein belongs to the G-protein coupled receptor 1 family. In terms of assembly, interacts with CLIC6. Interacts with GRK4. Interacts with PALM. Interacts with FLNA (via filamin repeat 21); increases PKA-mediated phosphorylation of FLNA. Phosphorylated by GRK4 (GRK4-alpha and GRK4-gamma). In terms of processing, palmitoylated. In terms of tissue distribution, brain.

It localises to the cell membrane. In terms of biological role, dopamine receptor whose activity is mediated by G proteins which inhibit adenylyl cyclase. Promotes cell proliferation. The polypeptide is D(3) dopamine receptor (Homo sapiens (Human)).